Consider the following 485-residue polypeptide: Cobyric acid synthase (485 aa).

Residues 248-435 (RLKVAVAVPP…LHGLFESPAA (188 aa)) enclose the GATase cobBQ-type domain. The active-site Nucleophile is the C329. Residue H427 is part of the active site.

It belongs to the CobB/CobQ family. CobQ subfamily.

It functions in the pathway cofactor biosynthesis; adenosylcobalamin biosynthesis. Its function is as follows. Catalyzes amidations at positions B, D, E, and G on adenosylcobyrinic A,C-diamide. NH(2) groups are provided by glutamine, and one molecule of ATP is hydrogenolyzed for each amidation. The polypeptide is Cobyric acid synthase (Azotobacter vinelandii (strain DJ / ATCC BAA-1303)).